The following is a 155-amino-acid chain: Deoxyuridine 5'-triphosphate nucleotidohydrolase (155 aa).

Residues 71 to 73 (RSG), asparagine 84, 88 to 90 (TID), and lysine 98 each bind substrate.

This sequence belongs to the dUTPase family. Requires Mg(2+) as cofactor.

The catalysed reaction is dUTP + H2O = dUMP + diphosphate + H(+). It participates in pyrimidine metabolism; dUMP biosynthesis; dUMP from dCTP (dUTP route): step 2/2. Functionally, this enzyme is involved in nucleotide metabolism: it produces dUMP, the immediate precursor of thymidine nucleotides and it decreases the intracellular concentration of dUTP so that uracil cannot be incorporated into DNA. This chain is Deoxyuridine 5'-triphosphate nucleotidohydrolase, found in Corynebacterium jeikeium (strain K411).